Here is a 314-residue protein sequence, read N- to C-terminus: Ribosomal RNA small subunit methyltransferase H (314 aa).

S-adenosyl-L-methionine-binding positions include 36–38 (GGH), Asp-56, Phe-82, Asp-104, and Gln-111.

Belongs to the methyltransferase superfamily. RsmH family.

It is found in the cytoplasm. The catalysed reaction is cytidine(1402) in 16S rRNA + S-adenosyl-L-methionine = N(4)-methylcytidine(1402) in 16S rRNA + S-adenosyl-L-homocysteine + H(+). Functionally, specifically methylates the N4 position of cytidine in position 1402 (C1402) of 16S rRNA. The sequence is that of Ribosomal RNA small subunit methyltransferase H from Ectopseudomonas mendocina (strain ymp) (Pseudomonas mendocina).